Reading from the N-terminus, the 506-residue chain is Procardosin-B (506 aa).

The first 24 residues, M1–S24, serve as a signal peptide directing secretion. A propeptide spanning residues V25 to S70 is cleaved from the precursor. The 419-residue stretch at Y85–A503 folds into the Peptidase A1 domain. D103 is an active-site residue. Residues C116 and C122 are joined by a disulfide bond. N139 and N252 each carry an N-linked (GlcNAc...) asparagine glycan. C281 and C285 are disulfide-bonded. D290 is an active-site residue. Residues V315–S417 form the Saposin B-type domain. Intrachain disulfides connect C320–C411, C345–C383, C351–C380, and C425–C462. A glycan (N-linked (GlcNAc...) asparagine) is linked at N397.

It belongs to the peptidase A1 family. As to quaternary structure, heterodimer of a light chain and a heavy chain. An intermediate form is produced first, and undergoes proteolytic processing to remove the internal plant-specific insert (PSI) and the propeptide. Detected in pistils, but not in seeds, bracts, midribs, roots, leaves or stamen extracts. Detected in seeds. In stigmas and styles, detected in the transmitting tissue and in contiguous subepidermal layers at the longitudenal grooves of the stigma (at protein level).

The protein resides in the microsome membrane. Its subcellular location is the protein storage vacuole. It is found in the secreted. It localises to the cell wall. The protein localises to the extracellular space. The protein resides in the extracellular matrix. With respect to regulation, inhibited by the specific aspartic proteinase inhibitors diazoacetyl-noleucine methyl ester and pepstatin. Aspartic protease. Cleaves alpha-lactalbumin but not beta-lactoglobulin. The chain is Procardosin-B from Cynara cardunculus (Cardoon).